Here is a 261-residue protein sequence, read N- to C-terminus: uncharacterized protein (261 aa).

Residues 1–22 form the signal peptide; that stretch reads MRDSKRVVLYISIIVLSIFIIG. The N-palmitoyl cysteine moiety is linked to residue C23. C23 is lipidated: S-diacylglycerol cysteine.

The protein belongs to the staphylococcal tandem lipoprotein family.

The protein localises to the cell membrane. This is an uncharacterized protein from Staphylococcus aureus (strain Mu50 / ATCC 700699).